We begin with the raw amino-acid sequence, 553 residues long: PE cleavage protein A (553 aa).

The 92-residue stretch at 1–92 (MSLLVVAPEW…SAGSYSAAEA (92 aa)) folds into the PE domain. D293 is an active-site residue.

Belongs to the mycobacterial PE family. PGRS subfamily. Post-translationally, undergoes auto-proteolytic processing.

Its subcellular location is the secreted. The protein resides in the cell surface. Its function is as follows. Aspartic protease that processes the lipase LipY and other PE_PGRS proteins. Can also cleave itself. Cleaves LipY both inside the PE domain, before amino acid 98, and after amino acids 136 and 149. Involved in virulence. The chain is PE cleavage protein A from Mycobacterium marinum (strain ATCC BAA-535 / M).